A 125-amino-acid chain; its full sequence is Small ribosomal subunit protein bS6 (125 aa).

It belongs to the bacterial ribosomal protein bS6 family.

Binds together with bS18 to 16S ribosomal RNA. This Campylobacter jejuni subsp. jejuni serotype O:23/36 (strain 81-176) protein is Small ribosomal subunit protein bS6.